Reading from the N-terminus, the 100-residue chain is Urease subunit gamma (100 aa).

It belongs to the urease gamma subunit family. In terms of assembly, heterotrimer of UreA (gamma), UreB (beta) and UreC (alpha) subunits. Three heterotrimers associate to form the active enzyme.

The protein localises to the cytoplasm. The enzyme catalyses urea + 2 H2O + H(+) = hydrogencarbonate + 2 NH4(+). It functions in the pathway nitrogen metabolism; urea degradation; CO(2) and NH(3) from urea (urease route): step 1/1. The polypeptide is Urease subunit gamma (Bordetella bronchiseptica (strain ATCC BAA-588 / NCTC 13252 / RB50) (Alcaligenes bronchisepticus)).